Reading from the N-terminus, the 393-residue chain is S-adenosylmethionine synthase 4 (393 aa).

Mg(2+) is bound at residue glutamate 9. Histidine 15 lines the ATP pocket. Glutamate 43 is a binding site for K(+). 2 residues coordinate L-methionine: glutamate 56 and glutamine 99. Residues 167-169 (DGK), 235-238 (SGRF), aspartate 246, 252-253 (RK), alanine 269, lysine 273, and lysine 277 contribute to the ATP site. Residue aspartate 246 participates in L-methionine binding. L-methionine is bound at residue lysine 277.

Belongs to the AdoMet synthase family. In terms of assembly, homotetramer. Requires Mn(2+) as cofactor. Mg(2+) serves as cofactor. The cofactor is Co(2+). K(+) is required as a cofactor.

It localises to the cytoplasm. It carries out the reaction L-methionine + ATP + H2O = S-adenosyl-L-methionine + phosphate + diphosphate. The protein operates within amino-acid biosynthesis; S-adenosyl-L-methionine biosynthesis; S-adenosyl-L-methionine from L-methionine: step 1/1. Functionally, catalyzes the formation of S-adenosylmethionine from methionine and ATP. The reaction comprises two steps that are both catalyzed by the same enzyme: formation of S-adenosylmethionine (AdoMet) and triphosphate, and subsequent hydrolysis of the triphosphate. The chain is S-adenosylmethionine synthase 4 (METK4) from Vitis vinifera (Grape).